The primary structure comprises 155 residues: Small ribosomal subunit protein uS7c (155 aa).

Belongs to the universal ribosomal protein uS7 family. Part of the 30S ribosomal subunit.

Its subcellular location is the plastid. The protein localises to the chloroplast. Functionally, one of the primary rRNA binding proteins, it binds directly to 16S rRNA where it nucleates assembly of the head domain of the 30S subunit. The protein is Small ribosomal subunit protein uS7c (rps7) of Physcomitrium patens (Spreading-leaved earth moss).